A 506-amino-acid chain; its full sequence is Maturase K (506 aa).

The protein belongs to the intron maturase 2 family. MatK subfamily.

The protein localises to the plastid. Its subcellular location is the chloroplast. Its function is as follows. Usually encoded in the trnK tRNA gene intron. Probably assists in splicing its own and other chloroplast group II introns. In Lathyrus sativus (White vetchling), this protein is Maturase K.